A 462-amino-acid polypeptide reads, in one-letter code: UPF0236 protein TTE2489 (462 aa).

Belongs to the UPF0236 family.

The polypeptide is UPF0236 protein TTE2489 (Caldanaerobacter subterraneus subsp. tengcongensis (strain DSM 15242 / JCM 11007 / NBRC 100824 / MB4) (Thermoanaerobacter tengcongensis)).